The primary structure comprises 603 residues: MAMNHHQRRSVPRLLTPIALSIVLSACSTQPSSPDVVDITAQPLLTAQTYLMRADASQGNQQNDWLIMALKAAIEENNPDQAQLLIMRLAKQPLTPTQQAQWQLLRAQLLANTEQYQEALEQLSFQANWSLPQVQWQQYHQLRADIFTALDRSFDSTRELVALYGLSSNKDKEALADQIWANLNHYSASKIIKLSTEPDEAQLDGWLQLAIYMKTLGSDLPQLKNTLEKWLAENPQHPAAIYTPKAITDILALEIVKPTNTALLLPLTGKFAKQAQFIRDGFVFAMMNDADRQTNATLTIIDTNAETLESVDAILTSKQIDFVVGPLIKGNIEKLQQFQQSRGQMIPTLALNIPDQIDTTAGACYLALSPEQEVAQAAKHLFTQGYRYPLILAPQNAYGERVVEAFNEEWRRYSKNKVAVNLFGDKRQLQRNINSIFGLQDSQQNIAQMESLLGMGLESQPRSRRDIDAVYIVANSSELTLIKPFIEVAINPDTRPPKLFSNSNSNTGGRQYEDLSGVTYSDIPLLIQPAPSIKEQLTQIWPESSNAERRLQALGMDAYRLMVELPQMKIVEGYTIDGQTGVLSIDEQCVVQREISWAEHGVR.

The signal sequence occupies residues 1–26 (MAMNHHQRRSVPRLLTPIALSIVLSA). A lipid anchor (N-palmitoyl cysteine) is attached at cysteine 27. Cysteine 27 is lipidated: S-diacylglycerol cysteine.

The protein belongs to the LpoA family. As to quaternary structure, interacts with PBP1a.

The protein resides in the cell outer membrane. Its function is as follows. Regulator of peptidoglycan synthesis that is essential for the function of penicillin-binding protein 1A (PBP1a). This chain is Penicillin-binding protein activator LpoA, found in Vibrio cholerae serotype O1 (strain ATCC 39541 / Classical Ogawa 395 / O395).